We begin with the raw amino-acid sequence, 396 residues long: Elongation factor Tu (396 aa).

The tr-type G domain occupies 10-205 (KPHVNIGTIG…AVDESIPDPV (196 aa)). Residues 19–26 (GHVDHGKT) form a G1 region. 19 to 26 (GHVDHGKT) contacts GTP. T26 provides a ligand contact to Mg(2+). The interval 62 to 66 (GITIN) is G2. Positions 83–86 (DAPG) are G3. GTP is bound by residues 83–87 (DAPGH) and 138–141 (NKAD). The segment at 138-141 (NKAD) is G4. Residues 175 to 177 (SAL) form a G5 region.

The protein belongs to the TRAFAC class translation factor GTPase superfamily. Classic translation factor GTPase family. EF-Tu/EF-1A subfamily. As to quaternary structure, monomer.

Its subcellular location is the cytoplasm. It carries out the reaction GTP + H2O = GDP + phosphate + H(+). In terms of biological role, GTP hydrolase that promotes the GTP-dependent binding of aminoacyl-tRNA to the A-site of ribosomes during protein biosynthesis. This Mycolicibacterium vanbaalenii (strain DSM 7251 / JCM 13017 / BCRC 16820 / KCTC 9966 / NRRL B-24157 / PYR-1) (Mycobacterium vanbaalenii) protein is Elongation factor Tu.